The primary structure comprises 414 residues: Serine--tRNA ligase (414 aa).

230 to 232 (TSE) lines the L-serine pocket. An ATP-binding site is contributed by 261 to 263 (RQE). Glu284 is an L-serine binding site. Residue 348–351 (EISS) coordinates ATP. Ser382 serves as a coordination point for L-serine.

The protein belongs to the class-II aminoacyl-tRNA synthetase family. Type-1 seryl-tRNA synthetase subfamily. Homodimer. The tRNA molecule binds across the dimer.

Its subcellular location is the cytoplasm. The catalysed reaction is tRNA(Ser) + L-serine + ATP = L-seryl-tRNA(Ser) + AMP + diphosphate + H(+). It carries out the reaction tRNA(Sec) + L-serine + ATP = L-seryl-tRNA(Sec) + AMP + diphosphate + H(+). The protein operates within aminoacyl-tRNA biosynthesis; selenocysteinyl-tRNA(Sec) biosynthesis; L-seryl-tRNA(Sec) from L-serine and tRNA(Sec): step 1/1. In terms of biological role, catalyzes the attachment of serine to tRNA(Ser). Is also able to aminoacylate tRNA(Sec) with serine, to form the misacylated tRNA L-seryl-tRNA(Sec), which will be further converted into selenocysteinyl-tRNA(Sec). The polypeptide is Serine--tRNA ligase (Campylobacter concisus (strain 13826)).